Here is a 164-residue protein sequence, read N- to C-terminus: Peptide deformylase-like (164 aa).

Residue Glu133 is part of the active site.

This sequence belongs to the polypeptide deformylase family.

The chain is Peptide deformylase-like from Agrobacterium fabrum (strain C58 / ATCC 33970) (Agrobacterium tumefaciens (strain C58)).